We begin with the raw amino-acid sequence, 361 residues long: Phosphoserine aminotransferase (361 aa).

Arg-42 is an L-glutamate binding site. Residues 76-77 (AR), Trp-102, Thr-153, Asp-173, and Gln-196 contribute to the pyridoxal 5'-phosphate site. Lys-197 is modified (N6-(pyridoxal phosphate)lysine). 238–239 (NT) is a binding site for pyridoxal 5'-phosphate.

The protein belongs to the class-V pyridoxal-phosphate-dependent aminotransferase family. SerC subfamily. In terms of assembly, homodimer. Pyridoxal 5'-phosphate is required as a cofactor.

It localises to the cytoplasm. It carries out the reaction O-phospho-L-serine + 2-oxoglutarate = 3-phosphooxypyruvate + L-glutamate. It catalyses the reaction 4-(phosphooxy)-L-threonine + 2-oxoglutarate = (R)-3-hydroxy-2-oxo-4-phosphooxybutanoate + L-glutamate. Its pathway is amino-acid biosynthesis; L-serine biosynthesis; L-serine from 3-phospho-D-glycerate: step 2/3. It participates in cofactor biosynthesis; pyridoxine 5'-phosphate biosynthesis; pyridoxine 5'-phosphate from D-erythrose 4-phosphate: step 3/5. Its function is as follows. Catalyzes the reversible conversion of 3-phosphohydroxypyruvate to phosphoserine and of 3-hydroxy-2-oxo-4-phosphonooxybutanoate to phosphohydroxythreonine. The protein is Phosphoserine aminotransferase of Buchnera aphidicola subsp. Acyrthosiphon pisum (strain Tuc7).